We begin with the raw amino-acid sequence, 252 residues long: Chitooligosaccharide deacetylase (252 aa).

Residues histidine 61 and histidine 125 each contribute to the Mg(2+) site.

Belongs to the YdjC deacetylase family. ChbG subfamily. In terms of assembly, homodimer. It depends on Mg(2+) as a cofactor.

The protein localises to the cytoplasm. The catalysed reaction is N,N'-diacetylchitobiose + H2O = N-acetyl-beta-D-glucosaminyl-(1-&gt;4)-D-glucosamine + acetate. It carries out the reaction diacetylchitobiose-6'-phosphate + H2O = N'-monoacetylchitobiose-6'-phosphate + acetate. It participates in glycan degradation; chitin degradation. In terms of biological role, involved in the degradation of chitin. ChbG is essential for growth on the acetylated chitooligosaccharides chitobiose and chitotriose but is dispensable for growth on cellobiose and chitosan dimer, the deacetylated form of chitobiose. Deacetylation of chitobiose-6-P and chitotriose-6-P is necessary for both the activation of the chb promoter by the regulatory protein ChbR and the hydrolysis of phosphorylated beta-glucosides by the phospho-beta-glucosidase ChbF. Catalyzes the removal of only one acetyl group from chitobiose-6-P to yield monoacetylchitobiose-6-P, the inducer of ChbR and the substrate of ChbF. This chain is Chitooligosaccharide deacetylase, found in Salmonella dublin (strain CT_02021853).